A 346-amino-acid chain; its full sequence is Protein Spea_1705 (346 aa).

Cysteine 101 acts as the Proton acceptor in catalysis. Substrate contacts are provided by residues 102–103 (GH), aspartate 262, and 267–268 (GT).

The protein belongs to the proline racemase family.

It carries out the reaction trans-3-hydroxy-L-proline = 1-pyrroline-2-carboxylate + H2O. In terms of biological role, in vitro, catalyzes the dehydration of trans-3-hydroxy-L-proline (t3LHyp) to Delta(1)-pyrroline-2-carboxylate (Pyr2C), albeit with very low efficiency. The physiological substrate may be different. Displays neither trans-4-hydroxy-L-proline (t4LHyp) epimerase nor proline racemase activity. The polypeptide is Protein Spea_1705 (Shewanella pealeana (strain ATCC 700345 / ANG-SQ1)).